A 715-amino-acid polypeptide reads, in one-letter code: Harpin secretion protein HrpI (715 aa).

7 helical membrane passes run 23-43 (GAAIVMSIVFMMIIPLPTGLI), 45-65 (VLIALNICISSLLIVLAMYLP), 69-89 (AFSTFPSVLLLTTMFRLALSI), 115-135 (GNLAVGLVIFLILTVVNFLVI), 203-223 (AIAGLVIVFINMIGGFAIGVL), 241-261 (IGDGLIAQIPALLISLTAGMI), and 298-318 (MLGFALLPGMPTAVFVIISAI).

The protein belongs to the FHIPEP (flagella/HR/invasion proteins export pore) family.

It localises to the cell inner membrane. Functionally, involved in the secretion of harpin; a proteinaceous elicitor of the hypersensitivity response in plants. This Erwinia amylovora (Fire blight bacteria) protein is Harpin secretion protein HrpI (hrpI).